A 186-amino-acid chain; its full sequence is MAQRTLVATFFLIFFLLTNLVCSKEIIVGGKTSSWKIPSSPSESLNKWAESLRFRVGDTLVWKYDEEKDSVLQVTKDAYINCNTTNPAANYSNGDTKVKLERSGPYFFISGSKSNCVEGEKLHIVVMSSRGGHTGGFFTGSSPSPAPSPALLGAPTVAPASGGSASSLTRQVGVLGFVGLLAIVLL.

A signal peptide spans 1–23; the sequence is MAQRTLVATFFLIFFLLTNLVCS. One can recognise a Phytocyanin domain in the interval 24–128; it reads KEIIVGGKTS…GEKLHIVVMS (105 aa). Cys82 and Cys116 are disulfide-bonded. N-linked (GlcNAc...) asparagine glycans are attached at residues Asn83 and Asn90. Ala165 is lipidated: GPI-anchor amidated alanine. Positions 166–186 are cleaved as a propeptide — removed in mature form; it reads SSLTRQVGVLGFVGLLAIVLL.

Belongs to the early nodulin-like (ENODL) family. Mostly expressed in seedlings, siliques and flowers, and, to a lower extent, in roots, stems and seeds, but barely in leaves.

Its subcellular location is the cell membrane. May act as a carbohydrate transporter. Required, together with ENODL11, ENODL12, ENODL13, ENODL14 and ENODL15, for male-female communication and pollen tube reception and burst at the synergid cell surface of the female gametophyte. The protein is Early nodulin-like protein 13 of Arabidopsis thaliana (Mouse-ear cress).